We begin with the raw amino-acid sequence, 83 residues long: Kunitz-type serine protease inhibitor nigrescinin-1 (83 aa).

Positions 1–24 (MSSGGLLLLLGLLTLWEALTPVSS) are cleaved as a signal peptide. The region spanning 31–81 (CELPEDSGPCKGLFHVFYYNSDQNQCLEFIYGGCYGNANNFKTIEECKRTC) is the BPTI/Kunitz inhibitor domain. Cystine bridges form between Cys-40–Cys-64 and Cys-56–Cys-77.

This sequence belongs to the venom Kunitz-type family. As to expression, expressed by the venom gland.

Its subcellular location is the secreted. Functionally, serine protease inhibitor. This is Kunitz-type serine protease inhibitor nigrescinin-1 from Cryptophis nigrescens (Eastern small-eyed snake).